The primary structure comprises 262 residues: Small ribosomal subunit protein eS1 (262 aa).

The protein belongs to the eukaryotic ribosomal protein eS1 family. Component of the small ribosomal subunit. Mature ribosomes consist of a small (40S) and a large (60S) subunit. The 40S subunit contains about 33 different proteins and 1 molecule of RNA (18S). The 60S subunit contains about 49 different proteins and 3 molecules of RNA (25S, 5.8S and 5S).

The protein localises to the cytoplasm. The chain is Small ribosomal subunit protein eS1 from Theileria annulata.